We begin with the raw amino-acid sequence, 436 residues long: Probable ABC transporter binding protein NosD (436 aa).

The first 27 residues, 1–27 (MFKAQATFSRYSAAVSLLLLFSGAAQA), serve as a signal peptide directing secretion. PbH1 repeat units follow at residues 85 to 113 (APDVLVEGCTLYEWGSDLTAMDSAVFILP), 115 to 136 (AERAQISNNRMRGPGFGVFVDG), 137 to 166 (TRDVQVIGNEIDGDAGVRSQDRGNGIHLFA), 167 to 188 (VSGARVLHNHVRNARDGIYIDT), 189 to 210 (SNGNHLEGNVIEDVRYGVHYMF), 233 to 255 (SRKLTVTGNRSEQDQNYGILMNY), 293 to 314 (SLFNTIENNHFEKSSLGIHLTA), and 316 to 354 (SEDNRISGNAFVGNQQQVKYVASRTQEWSVDGRGNYWSD).

Belongs to the NosD family. In terms of assembly, the complex may be composed of an ATP-binding protein (NosF), a transmembrane protein (NosY) and a solute-binding protein (NosD).

The protein localises to the periplasm. In terms of biological role, required for the assembly of the copper chromophores of nitrous oxide reductase. Could be part of the ABC transporter complex NosDFY. This is Probable ABC transporter binding protein NosD from Stutzerimonas stutzeri (Pseudomonas stutzeri).